A 95-amino-acid chain; its full sequence is Aspartyl/glutamyl-tRNA(Asn/Gln) amidotransferase subunit C (95 aa).

It belongs to the GatC family. In terms of assembly, heterotrimer of A, B and C subunits.

The catalysed reaction is L-glutamyl-tRNA(Gln) + L-glutamine + ATP + H2O = L-glutaminyl-tRNA(Gln) + L-glutamate + ADP + phosphate + H(+). It catalyses the reaction L-aspartyl-tRNA(Asn) + L-glutamine + ATP + H2O = L-asparaginyl-tRNA(Asn) + L-glutamate + ADP + phosphate + 2 H(+). Functionally, allows the formation of correctly charged Asn-tRNA(Asn) or Gln-tRNA(Gln) through the transamidation of misacylated Asp-tRNA(Asn) or Glu-tRNA(Gln) in organisms which lack either or both of asparaginyl-tRNA or glutaminyl-tRNA synthetases. The reaction takes place in the presence of glutamine and ATP through an activated phospho-Asp-tRNA(Asn) or phospho-Glu-tRNA(Gln). In Rhizobium rhizogenes (strain K84 / ATCC BAA-868) (Agrobacterium radiobacter), this protein is Aspartyl/glutamyl-tRNA(Asn/Gln) amidotransferase subunit C.